The chain runs to 344 residues: MTNMMRALVKTRPEVGLWMERVPVPEVGPNDVLIRVRKSAICGTDVHIWNWDQWAQKTIPVPMVVGHEFMGEIVEVGPAVTKHHVGERVSGEGHIVCGKCRNCRAGRGHLCRNTLGVGVNRPGSFAEFVCLPEYNVVSIPDDVPDEIAAIFDPFGNAVHTALSFDLVGEDVLVTGAGPIGIMGALVAKRCGARKVVITDINPVRLDLARKVGIDYVVDASKENLADVMRVIGMTEGFDVGLEMSGAAPAFRDMIDKMNNGGKIAILGIAPAGFEIDWNKVIFKMLNLKGIYGREMFETWYKMIAFVQGGLDLSQIITHRIGIDEFGDGFEAMRSGNSGKVVMDW.

Zn(2+) is bound at residue cysteine 42. Residues threonine 44 and histidine 47 each act as charge relay system in the active site. Zn(2+)-binding residues include histidine 67, glutamate 68, cysteine 97, cysteine 100, cysteine 103, and cysteine 111. Residues isoleucine 179, aspartate 199, arginine 204, 266 to 268 (LGI), and 290 to 291 (IY) each bind NAD(+).

This sequence belongs to the zinc-containing alcohol dehydrogenase family. As to quaternary structure, homotetramer. Requires Zn(2+) as cofactor.

The protein resides in the cytoplasm. The enzyme catalyses L-threonine + NAD(+) = (2S)-2-amino-3-oxobutanoate + NADH + H(+). It participates in amino-acid degradation; L-threonine degradation via oxydo-reductase pathway; glycine from L-threonine: step 1/2. In terms of biological role, catalyzes the NAD(+)-dependent oxidation of L-threonine to 2-amino-3-ketobutyrate. This chain is L-threonine 3-dehydrogenase, found in Sinorhizobium medicae (strain WSM419) (Ensifer medicae).